Consider the following 456-residue polypeptide: Phospholipase A1 member A (456 aa).

A signal peptide spans 1 to 25 (MRPGLWETCFWLWGPLLWLSIGSSG). The Nucleophile role is filled by S166. The active-site Charge relay system is D190. The cysteines at positions 245 and 258 are disulfide-linked. H260 serves as the catalytic Charge relay system. Intrachain disulfides connect C282–C293 and C296–C304. Residue N365 is glycosylated (N-linked (GlcNAc...) asparagine).

Belongs to the AB hydrolase superfamily. Lipase family.

It localises to the secreted. It carries out the reaction a 1,2-diacyl-sn-glycero-3-phospho-L-serine + H2O = a 2-acyl-sn-glycero-3-phospho-L-serine + a fatty acid + H(+). It catalyses the reaction 1,2-di-(9Z)-octadecenoyl-sn-glycero-3-phospho-L-serine + H2O = 2-(9Z-octadecenoyl)-sn-glycero-3-phospho-L-serine + (9Z)-octadecenoate + H(+). The enzyme catalyses 1-hexadecanoyl-2-(5Z,8Z,11Z,14Z-eicosatetraenoyl)-sn-glycero-3-phospho-L-serine + H2O = 2-(5Z,8Z,11Z,14Z)-eicosatetraenoyl-sn-glycero-3-phospho-L-serine + hexadecanoate + H(+). The catalysed reaction is a 1-acyl-sn-glycero-3-phospho-L-serine + H2O = sn-glycero-3-phospho-L-serine + a fatty acid + H(+). It carries out the reaction 1-(9Z-octadecenoyl)-sn-glycero-3-phospho-L-serine + H2O = sn-glycero-3-phospho-L-serine + (9Z)-octadecenoate + H(+). Hydrolyzes the ester bond of the acyl group attached at the sn-1 position of phosphatidylserines (phospholipase A1 activity) and 1-acyl-2-lysophosphatidylserines (lysophospholipase activity) in the pathway of phosphatidylserines acyl chain remodeling. Cleaves phosphatidylserines exposed on the outer leaflet of the plasma membrane of apoptotic cells producing 2-acyl-1-lysophosphatidylserines, which in turn enhance mast cell activation and histamine production. Has no activity toward other glycerophospholipids including phosphatidylcholines, phosphatidylethanolamines, phosphatidic acids or phosphatidylinositols, or glycerolipids such as triolein. The polypeptide is Phospholipase A1 member A (Mus musculus (Mouse)).